Consider the following 436-residue polypeptide: 3-ketoacyl-CoA thiolase (436 aa).

Catalysis depends on Cys-99, which acts as the Acyl-thioester intermediate. Catalysis depends on proton acceptor residues His-392 and Cys-422.

The protein belongs to the thiolase-like superfamily. Thiolase family. Heterotetramer of two alpha chains (FadJ) and two beta chains (FadI).

It localises to the cytoplasm. It carries out the reaction an acyl-CoA + acetyl-CoA = a 3-oxoacyl-CoA + CoA. Its pathway is lipid metabolism; fatty acid beta-oxidation. Catalyzes the final step of fatty acid oxidation in which acetyl-CoA is released and the CoA ester of a fatty acid two carbons shorter is formed. In Salmonella heidelberg (strain SL476), this protein is 3-ketoacyl-CoA thiolase.